A 291-amino-acid chain; its full sequence is Early E4 34 kDa protein (291 aa).

This sequence belongs to the adenoviridae E4 30 to 34 kDa protein family. Interacts with E1B-55k.

It localises to the host nucleus. The protein localises to the host cytoplasm. In terms of biological role, plays a major role to prevent cellular inhibition of viral genome replication by nuclear bodies. Assembles an SCF-like E3 ubiquitin ligase complex based on the cellular proteins ELOB, ELOC, CUL5 and RBX1, in cooperation with viral E1B-55K. This viral RING-type ligase ubiquitinates cellular substrates prior to proteasomal degradation: p53/TP53, LIG4, MRE11-RAD50-NBS1 (MRN) complex, ITGA3, DAXX and BLM. This Homo sapiens (Human) protein is Early E4 34 kDa protein.